Reading from the N-terminus, the 200-residue chain is Ras-related protein Rab5 (200 aa).

Residues 17 to 25 (GDMGAGKSS), 36 to 42 (LEFQEST), 65 to 69 (DTAGQ), 123 to 126 (NKAD), and 153 to 155 (SAK) contribute to the GTP site. The Effector region motif lies at 39–47 (QESTIGAAF). 2 S-geranylgeranyl cysteine lipidation sites follow: Cys198 and Cys199.

The protein belongs to the small GTPase superfamily. Rab family. Virtually not expressed in leaves, higher in stems and roots, and highest in flowers.

It is found in the cell membrane. In terms of biological role, protein transport. Probably involved in vesicular traffic. This is Ras-related protein Rab5 (RAB5) from Nicotiana tabacum (Common tobacco).